Consider the following 341-residue polypeptide: ATP-dependent 6-phosphofructokinase 3 (341 aa).

ATP is bound by residues G10, 72–73 (RV), and 102–105 (GEGT). Mg(2+) is bound at residue E103. Residues 125–127 (TID), R162, 169–171 (MGR), E222, R266, and 272–275 (HVQR) each bind substrate. Residue D127 is the Proton acceptor of the active site.

It belongs to the phosphofructokinase type A (PFKA) family. Mixed-substrate PFK group III subfamily. Homodimer or homotetramer. Requires Mg(2+) as cofactor.

The protein localises to the cytoplasm. The enzyme catalyses beta-D-fructose 6-phosphate + ATP = beta-D-fructose 1,6-bisphosphate + ADP + H(+). It participates in carbohydrate degradation; glycolysis; D-glyceraldehyde 3-phosphate and glycerone phosphate from D-glucose: step 3/4. Functionally, catalyzes the phosphorylation of D-fructose 6-phosphate to fructose 1,6-bisphosphate by ATP, the first committing step of glycolysis. In Streptomyces coelicolor (strain ATCC BAA-471 / A3(2) / M145), this protein is ATP-dependent 6-phosphofructokinase 3.